We begin with the raw amino-acid sequence, 341 residues long: Phenylalanine--tRNA ligase alpha subunit (341 aa).

Glu256 contacts Mg(2+).

It belongs to the class-II aminoacyl-tRNA synthetase family. Phe-tRNA synthetase alpha subunit type 1 subfamily. Tetramer of two alpha and two beta subunits. Requires Mg(2+) as cofactor.

The protein localises to the cytoplasm. It catalyses the reaction tRNA(Phe) + L-phenylalanine + ATP = L-phenylalanyl-tRNA(Phe) + AMP + diphosphate + H(+). This Chlamydia abortus (strain DSM 27085 / S26/3) (Chlamydophila abortus) protein is Phenylalanine--tRNA ligase alpha subunit.